Here is a 592-residue protein sequence, read N- to C-terminus: Putative RING finger protein ORF9 (592 aa).

The RING-type zinc-finger motif lies at 12–49 (CCICLEEDIERVDTIPCQHTVCRPCYLKPMINKCPVCR). A coiled-coil region spans residues 414-441 (WELIKREELLQRRYKREEQNLKYTSNRL).

The protein is Putative RING finger protein ORF9 of Ostreid herpesvirus 1 (isolate France) (OsHV-1).